A 425-amino-acid polypeptide reads, in one-letter code: Glutamate-1-semialdehyde 2,1-aminomutase (425 aa).

Lys265 is modified (N6-(pyridoxal phosphate)lysine).

It belongs to the class-III pyridoxal-phosphate-dependent aminotransferase family. HemL subfamily. As to quaternary structure, homodimer. It depends on pyridoxal 5'-phosphate as a cofactor.

The protein localises to the cytoplasm. The catalysed reaction is (S)-4-amino-5-oxopentanoate = 5-aminolevulinate. Its pathway is porphyrin-containing compound metabolism; protoporphyrin-IX biosynthesis; 5-aminolevulinate from L-glutamyl-tRNA(Glu): step 2/2. This chain is Glutamate-1-semialdehyde 2,1-aminomutase, found in Psychromonas ingrahamii (strain DSM 17664 / CCUG 51855 / 37).